Here is a 153-residue protein sequence, read N- to C-terminus: MRCPSCQHHGTRVLDSRPVDEGRSIRRRRECEQCHYRFTTFEKVEEMPLIVVKKQGMREEFSRDKILRGLIKACEKRPVALEELEKITQDIERELRNQGVAEVKSETIGEMVMERLSKVDEVAYVRFASVYRQFKDLNVFIEELKELIKKEQR.

A zinc finger lies at 3–34 (CPSCQHHGTRVLDSRPVDEGRSIRRRRECEQC). An ATP-cone domain is found at 49–139 (LIVVKKQGMR…VYRQFKDLNV (91 aa)).

This sequence belongs to the NrdR family. It depends on Zn(2+) as a cofactor.

Its function is as follows. Negatively regulates transcription of bacterial ribonucleotide reductase nrd genes and operons by binding to NrdR-boxes. This is Transcriptional repressor NrdR from Geobacillus sp. (strain WCH70).